The following is a 343-amino-acid chain: UDP-3-O-acylglucosamine N-acyltransferase (343 aa).

Histidine 239 (proton acceptor) is an active-site residue.

Belongs to the transferase hexapeptide repeat family. LpxD subfamily. In terms of assembly, homotrimer.

The catalysed reaction is a UDP-3-O-[(3R)-3-hydroxyacyl]-alpha-D-glucosamine + a (3R)-hydroxyacyl-[ACP] = a UDP-2-N,3-O-bis[(3R)-3-hydroxyacyl]-alpha-D-glucosamine + holo-[ACP] + H(+). Its pathway is bacterial outer membrane biogenesis; LPS lipid A biosynthesis. Catalyzes the N-acylation of UDP-3-O-acylglucosamine using 3-hydroxyacyl-ACP as the acyl donor. Is involved in the biosynthesis of lipid A, a phosphorylated glycolipid that anchors the lipopolysaccharide to the outer membrane of the cell. The protein is UDP-3-O-acylglucosamine N-acyltransferase of Vibrio vulnificus (strain YJ016).